The chain runs to 628 residues: Forkhead box protein O (628 aa).

5 disordered regions span residues 39–77 (RARS…DSQQ), 182–205 (KSVR…RAKK), 217–269 (GLND…RLSP), 316–359 (QQQG…APGY), and 389–415 (NSVT…YSNV). Thr-44 carries the post-translational modification Phosphothreonine; by PKB/AKT1. Polar residues predominate over residues 63 to 77 (TKASNQQLAPGDSQQ). Ser-75 bears the Phosphoserine mark. Positions 95-201 (WGNLSYADLI…ETSRYEKRRG (107 aa)) form a DNA-binding region, fork-head. At Ser-190 the chain carries Phosphoserine; by PKB/AKT1. 2 stretches are compositionally biased toward polar residues: residues 221-230 (ATPSPSSSVS) and 256-265 (RASSNASSCG). Ser-259 carries the phosphoserine; by PKB/AKT1 modification. Residues Ser-262, Ser-263, and Ser-268 each carry the phosphoserine modification. Positions 328–337 (SQPPPPPYQP) are enriched in pro residues. Over residues 338 to 351 (PQHQQAQQQQSPYA) the composition is skewed to low complexity. Residues 402 to 414 (SEPSSDSLNTYSN) show a composition bias toward polar residues.

In terms of assembly, interacts with melt.

Its subcellular location is the cytoplasm. The protein resides in the nucleus. Transcription factor involved in the regulation of the insulin signaling pathway. Consistently activates both the downstream target Thor\d4EBP and the feedback control target InR. Involved in negative regulation of the cell cycle, modulating cell growth and proliferation. In response to cellular stresses, such as nutrient deprivation or increased levels of reactive oxygen species, foxo is activated and inhibits growth through the action of target genes such as Thor. Foxo activated in the adult fat body can regulate lifespan in adults; an insulin peptide itself may function as one secondary messenger of insulin-regulated aging. Also regulates Lip4, homolog of human acid lipases, thereby acting as a key modulator of lipid metabolism by insulin signaling and integrates insulin responses to glucose and lipid homeostasis. The protein is Forkhead box protein O of Drosophila yakuba (Fruit fly).